We begin with the raw amino-acid sequence, 766 residues long: Subtilisin-like protease SBT4.15 (766 aa).

A signal peptide spans 1–23 (MVSNQRVRLFMLCFCLVNNAVIA). Positions 24 to 113 (ATEDENVERK…VFKNTQRQLH (90 aa)) are cleaved as a propeptide — activation peptide. Positions 35–113 (YIVYMGEATE…VFKNTQRQLH (79 aa)) constitute an Inhibitor I9 domain. One can recognise a Peptidase S8 domain in the interval 117–601 (SWDFLGLVES…SGQINPRRAI (485 aa)). Catalysis depends on Asp-144, which acts as the Charge relay system. A glycan (N-linked (GlcNAc...) asparagine) is linked at Asn-175. His-210 serves as the catalytic Charge relay system. Asn-233, Asn-376, and Asn-465 each carry an N-linked (GlcNAc...) asparagine glycan. The region spanning 365–460 (MYPLTSGSLA…YVFFEDGTKI (96 aa)) is the PA domain. Ser-543 serves as the catalytic Charge relay system. N-linked (GlcNAc...) asparagine glycosylation is found at Asn-624, Asn-638, and Asn-668.

This sequence belongs to the peptidase S8 family. The C-terminal propeptide is autocleaved.

The protein resides in the secreted. This Arabidopsis thaliana (Mouse-ear cress) protein is Subtilisin-like protease SBT4.15.